A 185-amino-acid chain; its full sequence is dCTP deaminase (185 aa).

107–112 (KSTYAR) contacts dCTP. Residue Glu133 is the Proton donor/acceptor of the active site. Gln152, Tyr166, and Gln176 together coordinate dCTP.

It belongs to the dCTP deaminase family. As to quaternary structure, homotrimer.

It carries out the reaction dCTP + H2O + H(+) = dUTP + NH4(+). Its pathway is pyrimidine metabolism; dUMP biosynthesis; dUMP from dCTP (dUTP route): step 1/2. Catalyzes the deamination of dCTP to dUTP. This is dCTP deaminase from Nitratiruptor sp. (strain SB155-2).